Reading from the N-terminus, the 548-residue chain is Chaperonin GroEL (548 aa).

ATP-binding positions include 30–33 (TLGP), lysine 51, 87–91 (DGTTT), glycine 415, and aspartate 495.

This sequence belongs to the chaperonin (HSP60) family. As to quaternary structure, forms a cylinder of 14 subunits composed of two heptameric rings stacked back-to-back. Interacts with the co-chaperonin GroES.

Its subcellular location is the cytoplasm. It carries out the reaction ATP + H2O + a folded polypeptide = ADP + phosphate + an unfolded polypeptide.. Together with its co-chaperonin GroES, plays an essential role in assisting protein folding. The GroEL-GroES system forms a nano-cage that allows encapsulation of the non-native substrate proteins and provides a physical environment optimized to promote and accelerate protein folding. This Erwinia tasmaniensis (strain DSM 17950 / CFBP 7177 / CIP 109463 / NCPPB 4357 / Et1/99) protein is Chaperonin GroEL.